The chain runs to 80 residues: Serine rich endogenous peptide 15 (80 aa).

The first 28 residues, 1–28, serve as a signal peptide directing secretion; sequence MSKEKSYVIALLLSLLLCLSFQVGVSEA. Short sequence motifs (SCOOP motif) lie at residues 32 to 46 and 66 to 80; these read AVTT…CANG and PRVA…GKGP. A disordered region spans residues 37 to 80; it reads YSDSPRCANGSSASPPTRHCPRGRPRPPTPRVAVHSNSTKGKGP. Short sequence motifs (sxS motif essential for MIK2 binding) lie at residues 38–40 and 72–74; these read SDS and SNS. Residues 71 to 80 show a composition bias toward polar residues; it reads HSNSTKGKGP.

This sequence belongs to the serine rich endogenous peptide (SCOOP) phytocytokine family. In terms of assembly, interacts with MIK2 (via extracellular leucine-rich repeat domain); this interaction triggers the formation of complex between MIK2 and the BAK1/SERK3 and SERK4 coreceptors, and subsequent BAK1 activation by phosphorylation. Mostly expressed in leaves, and, to a lower extent, in seedlings shoots, roots, stems, siliques, seeds and flowers.

It localises to the cell membrane. The protein localises to the secreted. It is found in the extracellular space. The protein resides in the apoplast. Its subcellular location is the endoplasmic reticulum. It localises to the golgi apparatus. Brassicaceae-specific phytocytokine (plant endogenous peptide released into the apoplast) perceived by MIK2 in a BAK1/SERK3 and SERK4 coreceptors-dependent manner, that modulates various physiological and antimicrobial processes including growth prevention and reactive oxygen species (ROS) response regulation. Inhibits root growth. This is Serine rich endogenous peptide 15 from Arabidopsis thaliana (Mouse-ear cress).